A 299-amino-acid chain; its full sequence is Lipoyl synthase 2 (299 aa).

The [4Fe-4S] cluster site is built by Cys-45, Cys-50, Cys-56, Cys-71, Cys-75, Cys-78, and Ser-295. In terms of domain architecture, Radical SAM core spans 57-284 (YASGTATFLL…KSFCSKLGFK (228 aa)).

The protein belongs to the radical SAM superfamily. Lipoyl synthase family. [4Fe-4S] cluster is required as a cofactor.

It is found in the cytoplasm. The catalysed reaction is [[Fe-S] cluster scaffold protein carrying a second [4Fe-4S](2+) cluster] + N(6)-octanoyl-L-lysyl-[protein] + 2 oxidized [2Fe-2S]-[ferredoxin] + 2 S-adenosyl-L-methionine + 4 H(+) = [[Fe-S] cluster scaffold protein] + N(6)-[(R)-dihydrolipoyl]-L-lysyl-[protein] + 4 Fe(3+) + 2 hydrogen sulfide + 2 5'-deoxyadenosine + 2 L-methionine + 2 reduced [2Fe-2S]-[ferredoxin]. The protein operates within protein modification; protein lipoylation via endogenous pathway; protein N(6)-(lipoyl)lysine from octanoyl-[acyl-carrier-protein]: step 2/2. Catalyzes the radical-mediated insertion of two sulfur atoms into the C-6 and C-8 positions of the octanoyl moiety bound to the lipoyl domains of lipoate-dependent enzymes, thereby converting the octanoylated domains into lipoylated derivatives. In Prochlorococcus marinus subsp. pastoris (strain CCMP1986 / NIES-2087 / MED4), this protein is Lipoyl synthase 2.